A 334-amino-acid polypeptide reads, in one-letter code: Porphobilinogen deaminase (334 aa).

S-(dipyrrolylmethanemethyl)cysteine is present on Cys-258.

The protein belongs to the HMBS family. Monomer. Dipyrromethane is required as a cofactor.

The catalysed reaction is 4 porphobilinogen + H2O = hydroxymethylbilane + 4 NH4(+). It participates in porphyrin-containing compound metabolism; protoporphyrin-IX biosynthesis; coproporphyrinogen-III from 5-aminolevulinate: step 2/4. Tetrapolymerization of the monopyrrole PBG into the hydroxymethylbilane pre-uroporphyrinogen in several discrete steps. In Ralstonia nicotianae (strain ATCC BAA-1114 / GMI1000) (Ralstonia solanacearum), this protein is Porphobilinogen deaminase.